Consider the following 91-residue polypeptide: Putative regulatory protein Moth_0891 (91 aa).

This sequence belongs to the RemA family.

The chain is Putative regulatory protein Moth_0891 from Moorella thermoacetica (strain ATCC 39073 / JCM 9320).